The sequence spans 287 residues: Eukaryotic translation initiation factor 3 subunit F (287 aa).

Positions 12-142 (VRVHPVVLFQ…IKAYVCVSLG (131 aa)) constitute an MPN domain.

The protein belongs to the eIF-3 subunit F family. As to quaternary structure, component of the eukaryotic translation initiation factor 3 (eIF-3) complex.

Its subcellular location is the cytoplasm. In terms of biological role, component of the eukaryotic translation initiation factor 3 (eIF-3) complex, which is involved in protein synthesis of a specialized repertoire of mRNAs and, together with other initiation factors, stimulates binding of mRNA and methionyl-tRNAi to the 40S ribosome. The eIF-3 complex specifically targets and initiates translation of a subset of mRNAs involved in cell proliferation. The protein is Eukaryotic translation initiation factor 3 subunit F of Culex quinquefasciatus (Southern house mosquito).